The primary structure comprises 184 residues: Ribosome-recycling factor (184 aa).

Belongs to the RRF family.

The protein resides in the cytoplasm. Its function is as follows. Responsible for the release of ribosomes from messenger RNA at the termination of protein biosynthesis. May increase the efficiency of translation by recycling ribosomes from one round of translation to another. This chain is Ribosome-recycling factor, found in Borrelia hermsii (strain HS1 / DAH).